A 205-amino-acid polypeptide reads, in one-letter code: Probable ADP-ribosylation factor At2g15310 (205 aa).

A lipid anchor (N-myristoyl glycine) is attached at glycine 2. Residues 24 to 31, 67 to 71, and 126 to 129 contribute to the GTP site; these read GLDGSGKT, DIGGQ, and NKQD.

This sequence belongs to the small GTPase superfamily. Arf family.

It is found in the golgi apparatus. Its function is as follows. GTP-binding protein involved in protein trafficking; may modulate vesicle budding and uncoating within the Golgi apparatus. The chain is Probable ADP-ribosylation factor At2g15310 from Arabidopsis thaliana (Mouse-ear cress).